Consider the following 120-residue polypeptide: Large ribosomal subunit protein uL18 (120 aa).

This sequence belongs to the universal ribosomal protein uL18 family. In terms of assembly, part of the 50S ribosomal subunit; part of the 5S rRNA/L5/L18/L25 subcomplex. Contacts the 5S and 23S rRNAs.

In terms of biological role, this is one of the proteins that bind and probably mediate the attachment of the 5S RNA into the large ribosomal subunit, where it forms part of the central protuberance. This Chloroflexus aurantiacus (strain ATCC 29364 / DSM 637 / Y-400-fl) protein is Large ribosomal subunit protein uL18.